We begin with the raw amino-acid sequence, 524 residues long: 11-oxo-beta-amyrin 30-oxidase (524 aa).

The chain crosses the membrane as a helical span at residues 9 to 29 (GTTVIISVLSVLLAVIPWYLL). Cysteine 472 serves as a coordination point for heme.

Belongs to the cytochrome P450 family. Heme is required as a cofactor. As to expression, expressed in flowers. Detected in roots upon salt treatment.

The protein resides in the membrane. The catalysed reaction is 11-oxo-beta-amyrin + 3 reduced [NADPH--hemoprotein reductase] + 3 O2 = glycyrrhetinate + 3 oxidized [NADPH--hemoprotein reductase] + 4 H2O + 4 H(+). Involved in the biosynthesis of triterpenoid saponins. Catalyzes three sequential oxidation steps at C-30 of 11-oxo-beta-amyrin. Also able to catalyze sequential C-30 hydroxylation of beta-amyrin to produce 30-hydroxy-beta-amyrin and 11-deoxoglycyrrhetinic acid. In Medicago truncatula (Barrel medic), this protein is 11-oxo-beta-amyrin 30-oxidase (CYP72A63).